A 95-amino-acid polypeptide reads, in one-letter code: Feather keratin B-4 (95 aa).

S1 carries the N-acetylserine modification.

It belongs to the avian keratin family. The avian keratins (F-ker, S-ker, C-ker and B-ker) are a complex mixture of very similar polypeptides.

The polypeptide is Feather keratin B-4 (Columba livia (Rock dove)).